Here is a 340-residue protein sequence, read N- to C-terminus: ATPase BagA (340 aa).

ATP contacts are provided by Gly-31, Gly-33, Lys-34, Ser-35, Thr-36, Asn-240, Pro-316, and Val-318.

Belongs to the arsA ATPase family. BagA/BagB subfamily. In terms of assembly, forms a heterodimer composed of BagA and BagB. Interacts with Rv1509. Also interacts with a large number of proteins, including proteins required for mycolic acid biosynthesis.

With respect to regulation, the ATPase activity of the BagAB complex is not stimulated by antimonite, an arsenite substitute, suggesting that BagAB is not a transporter for this family of elements. Its function is as follows. Component of the heterodimeric BagAB ATPase complex, whose two subunits are actively involved in ATP hydrolysis. The ATPase activity is required to mediate resistance against nitric oxide (NO) and elevated levels of glycerol. This chain is ATPase BagA, found in Mycobacterium tuberculosis (strain ATCC 25618 / H37Rv).